The chain runs to 164 residues: UPF0304 protein MS2240 (164 aa).

It belongs to the UPF0304 family.

The protein is UPF0304 protein MS2240 of Mannheimia succiniciproducens (strain KCTC 0769BP / MBEL55E).